A 363-amino-acid polypeptide reads, in one-letter code: Elongation factor Tu, chloroplastic (363 aa).

The 189-residue stretch at 1–189 folds into the tr-type G domain; the sequence is TLTAAITMAL…NVDEYIPTPE (189 aa). GTP-binding positions include 55–59 and 110–113; these read DCPGH and NKED.

This sequence belongs to the TRAFAC class translation factor GTPase superfamily. Classic translation factor GTPase family. EF-Tu/EF-1A subfamily.

The protein resides in the plastid. It localises to the chloroplast. It catalyses the reaction GTP + H2O = GDP + phosphate + H(+). GTP hydrolase that promotes the GTP-dependent binding of aminoacyl-tRNA to the A-site of ribosomes during protein biosynthesis. The protein is Elongation factor Tu, chloroplastic (tufA) of Gymnochlora stellata.